We begin with the raw amino-acid sequence, 405 residues long: uncharacterized protein (405 aa).

The next 12 membrane-spanning stretches (helical) occupy residues 3–23, 42–62, 73–93, 95–115, 135–155, 162–182, 209–229, 248–268, 280–300, 309–329, 346–366, and 377–397; these read IIAK…PTTE, GITQ…ILTL, PIAL…IFAV, IEML…GSVI, SLSP…GYII, YVFV…YKVL, ILWL…GFFI, KLAF…GYLI, GLGF…AFIL, LAIA…NLLI, TAGS…TYLV, and FALL…CIWV.

The protein belongs to the major facilitator superfamily. Bcr/CmlA family.

It is found in the cell inner membrane. This is an uncharacterized protein from Rickettsia felis (strain ATCC VR-1525 / URRWXCal2) (Rickettsia azadi).